A 1366-amino-acid chain; its full sequence is DNA-directed RNA polymerase subunit beta'' (1366 aa).

Zn(2+)-binding residues include C220, C291, C298, and C301.

The protein belongs to the RNA polymerase beta' chain family. RpoC2 subfamily. In terms of assembly, in plastids the minimal PEP RNA polymerase catalytic core is composed of four subunits: alpha, beta, beta', and beta''. When a (nuclear-encoded) sigma factor is associated with the core the holoenzyme is formed, which can initiate transcription. It depends on Zn(2+) as a cofactor.

Its subcellular location is the plastid. The protein resides in the chloroplast. The enzyme catalyses RNA(n) + a ribonucleoside 5'-triphosphate = RNA(n+1) + diphosphate. DNA-dependent RNA polymerase catalyzes the transcription of DNA into RNA using the four ribonucleoside triphosphates as substrates. This chain is DNA-directed RNA polymerase subunit beta'', found in Phaseolus vulgaris (Kidney bean).